We begin with the raw amino-acid sequence, 142 residues long: Arginine decarboxylase proenzyme (142 aa).

The Schiff-base intermediate with substrate; via pyruvic acid role is filled by Ser81. Pyruvic acid (Ser); by autocatalysis is present on Ser81. His86 acts as the Proton acceptor; for processing activity in catalysis. The active-site Proton donor; for catalytic activity is the Cys101.

This sequence belongs to the prokaryotic AdoMetDC family. Type 1 subfamily. In terms of assembly, heterooctamer of four alpha and four beta chains arranged as a tetramer of alpha/beta heterodimers. It depends on pyruvate as a cofactor. In terms of processing, is synthesized initially as an inactive proenzyme. Formation of the active enzyme involves a self-maturation process in which the active site pyruvoyl group is generated from an internal serine residue via an autocatalytic post-translational modification. Two non-identical subunits are generated from the proenzyme in this reaction, and the pyruvate is formed at the N-terminus of the alpha chain, which is derived from the carboxyl end of the proenzyme. The post-translation cleavage follows an unusual pathway, termed non-hydrolytic serinolysis, in which the side chain hydroxyl group of the serine supplies its oxygen atom to form the C-terminus of the beta chain, while the remainder of the serine residue undergoes an oxidative deamination to produce ammonia and the pyruvoyl group blocking the N-terminus of the alpha chain.

It catalyses the reaction L-arginine + H(+) = agmatine + CO2. Its pathway is amine and polyamine biosynthesis; agmatine biosynthesis; agmatine from L-arginine: step 1/1. Specifically catalyzes the decarboxylation of L-arginine to agmatine. Has no S-adenosylmethionine decarboxylase (AdoMetDC) activity. The chain is Arginine decarboxylase proenzyme from Hyperthermus butylicus (strain DSM 5456 / JCM 9403 / PLM1-5).